A 377-amino-acid polypeptide reads, in one-letter code: Glutamate 5-kinase (377 aa).

Lys18 is a binding site for ATP. Residues Ser59, Asp146, and Asn158 each coordinate substrate. ATP is bound by residues 178 to 179 (SD) and 222 to 228 (TGGMATK). In terms of domain architecture, PUA spans 286–363 (QGWVTVDAGA…DAIEAELGFT (78 aa)).

Belongs to the glutamate 5-kinase family.

The protein resides in the cytoplasm. It catalyses the reaction L-glutamate + ATP = L-glutamyl 5-phosphate + ADP. It participates in amino-acid biosynthesis; L-proline biosynthesis; L-glutamate 5-semialdehyde from L-glutamate: step 1/2. Functionally, catalyzes the transfer of a phosphate group to glutamate to form L-glutamate 5-phosphate. The chain is Glutamate 5-kinase from Caulobacter vibrioides (strain ATCC 19089 / CIP 103742 / CB 15) (Caulobacter crescentus).